The primary structure comprises 182 residues: dCTP deaminase, dUMP-forming (182 aa).

Residues 96–101 (RSSIGR), Asp-113, 121–123 (TLE), Gln-142, Tyr-156, and Gln-163 contribute to the dCTP site. The active-site Proton donor/acceptor is Glu-123.

The protein belongs to the dCTP deaminase family. As to quaternary structure, homotrimer.

It catalyses the reaction dCTP + 2 H2O = dUMP + NH4(+) + diphosphate. Its pathway is pyrimidine metabolism; dUMP biosynthesis; dUMP from dCTP: step 1/1. Functionally, bifunctional enzyme that catalyzes both the deamination of dCTP to dUTP and the hydrolysis of dUTP to dUMP without releasing the toxic dUTP intermediate. This chain is dCTP deaminase, dUMP-forming, found in Halothermothrix orenii (strain H 168 / OCM 544 / DSM 9562).